A 303-amino-acid polypeptide reads, in one-letter code: Pantothenate synthetase (303 aa).

30 to 37 (MGYLHAGH) is a binding site for ATP. His-37 serves as the catalytic Proton donor. Gln-61 is a (R)-pantoate binding site. Position 61 (Gln-61) interacts with beta-alanine. 147–150 (GAKD) is a binding site for ATP. Gln-153 contacts (R)-pantoate. ATP is bound by residues Val-176 and 184-187 (LSSR).

This sequence belongs to the pantothenate synthetase family. Homodimer.

The protein localises to the cytoplasm. The catalysed reaction is (R)-pantoate + beta-alanine + ATP = (R)-pantothenate + AMP + diphosphate + H(+). It participates in cofactor biosynthesis; (R)-pantothenate biosynthesis; (R)-pantothenate from (R)-pantoate and beta-alanine: step 1/1. In terms of biological role, catalyzes the condensation of pantoate with beta-alanine in an ATP-dependent reaction via a pantoyl-adenylate intermediate. In Rhizobium johnstonii (strain DSM 114642 / LMG 32736 / 3841) (Rhizobium leguminosarum bv. viciae), this protein is Pantothenate synthetase.